Reading from the N-terminus, the 142-residue chain is Transcription antitermination protein NusB (142 aa).

The protein belongs to the NusB family. In terms of assembly, monomer or homodimer; in equilibrium, with a preference for the monomer. Dimerization may be employed to package NusB in an inactive form until recruitment into antitermination complexes.

In terms of biological role, involved in transcription antitermination. Required for transcription of ribosomal RNA (rRNA) genes. Binds specifically to the boxA antiterminator sequence of the ribosomal RNA (rrn) operons. The sequence is that of Transcription antitermination protein NusB from Thermotoga maritima (strain ATCC 43589 / DSM 3109 / JCM 10099 / NBRC 100826 / MSB8).